A 225-amino-acid polypeptide reads, in one-letter code: Methylthioribulose-1-phosphate dehydratase (225 aa).

The Zn(2+) site is built by His-106 and His-108.

This sequence belongs to the aldolase class II family. MtnB subfamily. It depends on Zn(2+) as a cofactor.

The catalysed reaction is 5-(methylsulfanyl)-D-ribulose 1-phosphate = 5-methylsulfanyl-2,3-dioxopentyl phosphate + H2O. Its pathway is amino-acid biosynthesis; L-methionine biosynthesis via salvage pathway; L-methionine from S-methyl-5-thio-alpha-D-ribose 1-phosphate: step 2/6. Catalyzes the dehydration of methylthioribulose-1-phosphate (MTRu-1-P) into 2,3-diketo-5-methylthiopentyl-1-phosphate (DK-MTP-1-P). The chain is Methylthioribulose-1-phosphate dehydratase from Xanthomonas oryzae pv. oryzae (strain PXO99A).